The following is a 444-amino-acid chain: Phosphoglucosamine mutase (444 aa).

S102 acts as the Phosphoserine intermediate in catalysis. Residues S102, D239, D241, and D243 each coordinate Mg(2+). S102 carries the post-translational modification Phosphoserine.

It belongs to the phosphohexose mutase family. It depends on Mg(2+) as a cofactor. In terms of processing, activated by phosphorylation.

The catalysed reaction is alpha-D-glucosamine 1-phosphate = D-glucosamine 6-phosphate. Its function is as follows. Catalyzes the conversion of glucosamine-6-phosphate to glucosamine-1-phosphate. The protein is Phosphoglucosamine mutase of Saccharopolyspora erythraea (strain ATCC 11635 / DSM 40517 / JCM 4748 / NBRC 13426 / NCIMB 8594 / NRRL 2338).